A 147-amino-acid polypeptide reads, in one-letter code: VEWTDAERSAIIALWGKLNPDELGPEALARCLIVYPWTQRFFASYGNLSSPAAIMGNPKVAAHGRTVEGGLMRAIKDMDNIKATYAPLSVMHSEKLHVDPDNFRLLADCITVCAAMKFGPSGFSPNVQEAWQKFLSVVVNALKRQYH.

Positions 2–147 (EWTDAERSAI…VVNALKRQYH (146 aa)) constitute a Globin domain. The heme b site is built by His-63 and His-92.

The protein belongs to the globin family. Heterotetramer of two alpha chains and two beta chains. In terms of tissue distribution, red blood cells.

Involved in oxygen transport from gills to the various peripheral tissues. The polypeptide is Hemoglobin subunit beta-A/B (Cyprinus carpio (Common carp)).